Consider the following 204-residue polypeptide: HTH-type transcriptional repressor KstR2 (204 aa).

One can recognise an HTH tetR-type domain in the interval 13–73 (SGRRTELLDI…EILRGFLDDL (61 aa)). The H-T-H motif DNA-binding region spans 36 to 55 (TVRDIADAAGILSGSLYHHF).

Homodimer.

Its function is as follows. Controls the expression of a small regulon that may play a role in the utilization of cholesterol. This is HTH-type transcriptional repressor KstR2 (kstR2) from Rhodococcus jostii (strain RHA1).